Consider the following 156-residue polypeptide: Transcription elongation factor GreA (156 aa).

Positions 2 to 27 (EKTFPMTKEGLDKLKAELENLKLVKR) form a coiled coil.

This sequence belongs to the GreA/GreB family.

Functionally, necessary for efficient RNA polymerase transcription elongation past template-encoded arresting sites. The arresting sites in DNA have the property of trapping a certain fraction of elongating RNA polymerases that pass through, resulting in locked ternary complexes. Cleavage of the nascent transcript by cleavage factors such as GreA or GreB allows the resumption of elongation from the new 3'terminus. GreA releases sequences of 2 to 3 nucleotides. The polypeptide is Transcription elongation factor GreA (Lactococcus lactis subsp. cremoris (strain SK11)).